A 200-amino-acid chain; its full sequence is General odorant-binding protein 70 (200 aa).

An N-terminal signal peptide occupies residues 1–29 (MRRQYSMWASTVAVIACGSALMLLHPVGA). 2 cysteine pairs are disulfide-bonded: C105–C174 and C152–C183.

Belongs to the PBP/GOBP family.

The protein resides in the secreted. Present in the aqueous fluid surrounding olfactory sensory dendrites and are thought to aid in the capture and transport of hydrophobic odorants into and through this fluid. This Anopheles gambiae (African malaria mosquito) protein is General odorant-binding protein 70 (Obp70).